Here is a 269-residue protein sequence, read N- to C-terminus: MRYTILTKGDSKSNALKHKMINHMKDFQMVEDSENPEIVISVGGDGTLLQAFHQYSHMLSKVAFVGIHTGHLGFYADWLPHEVEKLIIEINNSEFQVIEYPLLELIVRYNDNGYETRYLALNEATMKTENGSTLVVDVNIRGKHFERFRGDGLCISTPSGSTAYNKALGGALIHPSLEAMQIAEIASINNRVFRTVGSPLVLPKHHTCLITPVNHDTIRTTIDHVSIKHKNVNAIQYRVANEKVRFARFRPFPFWKRVHDSFISSDDER.

Residue aspartate 45 is the Proton acceptor of the active site. NAD(+) contacts are provided by residues 45 to 46, 122 to 123, arginine 149, aspartate 151, and alanine 186; these read DG and NE.

It belongs to the NAD kinase family. A divalent metal cation is required as a cofactor.

Its subcellular location is the cytoplasm. It catalyses the reaction NAD(+) + ATP = ADP + NADP(+) + H(+). Involved in the regulation of the intracellular balance of NAD and NADP, and is a key enzyme in the biosynthesis of NADP. Catalyzes specifically the phosphorylation on 2'-hydroxyl of the adenosine moiety of NAD to yield NADP. The chain is NAD kinase from Staphylococcus epidermidis (strain ATCC 35984 / DSM 28319 / BCRC 17069 / CCUG 31568 / BM 3577 / RP62A).